Here is a 99-residue protein sequence, read N- to C-terminus: VEVLMGGSGGELAFIPNELQVNAGEQIVFKNNAGFPHNVIFDEDAVPAGVDVSSISMSEEDLLNAPGETYVVKLDKKGTYRFFCAPHQGIGMSGIVTVN.

One can recognise a Plastocyanin-like domain in the interval 1–99 (VEVLMGGSGG…IGMSGIVTVN (99 aa)). Histidine 37, cysteine 84, histidine 87, and methionine 92 together coordinate Cu cation.

The protein belongs to the plastocyanin family. It depends on Cu(2+) as a cofactor.

The protein localises to the plastid. The protein resides in the chloroplast thylakoid membrane. In terms of biological role, participates in electron transfer between P700 and the cytochrome b6-f complex in photosystem I. The polypeptide is Plastocyanin (PETE) (Ginkgo biloba (Ginkgo)).